The primary structure comprises 300 residues: UDP-N-acetylenolpyruvoylglucosamine reductase (300 aa).

Positions 28 to 190 constitute an FAD-binding PCMH-type domain; that stretch reads KIGGRVKYLV…TRAMMSFKKE (163 aa). The active site involves Arg169. The active-site Proton donor is the Ser219. Residue Glu290 is part of the active site.

The protein belongs to the MurB family. It depends on FAD as a cofactor.

The protein resides in the cytoplasm. It carries out the reaction UDP-N-acetyl-alpha-D-muramate + NADP(+) = UDP-N-acetyl-3-O-(1-carboxyvinyl)-alpha-D-glucosamine + NADPH + H(+). Its pathway is cell wall biogenesis; peptidoglycan biosynthesis. Functionally, cell wall formation. The polypeptide is UDP-N-acetylenolpyruvoylglucosamine reductase (Thermotoga sp. (strain RQ2)).